The following is a 280-amino-acid chain: Dehydrogenase/reductase SDR family member 2, mitochondrial (280 aa).

Residues 1 to 23 (MLSAVARGYQGWFHPCARLSVRM) constitute a mitochondrion transit peptide. NAD(+) is bound by residues Ser46 and Ile48. An N6-acetyllysine; alternate modification is found at Lys96. Lys96 is modified (N6-succinyllysine; alternate). A substrate-binding site is contributed by Ser172. Residues Tyr185 and Lys189 each contribute to the NAD(+) site. The active-site Proton acceptor is the Tyr185. At Lys219 the chain carries N6-acetyllysine; alternate. An N6-succinyllysine; alternate modification is found at Lys219. NAD(+) is bound at residue Thr220. Residue Ser223 is modified to Phosphoserine. Position 237 is an N6-succinyllysine (Lys237).

This sequence belongs to the short-chain dehydrogenases/reductases (SDR) family. As to quaternary structure, directly interacts with MDM2; this interaction occurs in the nucleus and does not target DHRS2 to degradation. In terms of tissue distribution, widely expressed, with highest levels in liver and kidney, followed by heart, spleen, skeletal muscle and placenta. In hemopoietic cells, expressed in dendritic cells, but not in monocytes, macrophages, granulocytes, nor in B and T lymphocytes.

It is found in the mitochondrion matrix. The protein localises to the nucleus. In terms of biological role, NADPH-dependent oxidoreductase which catalyzes the reduction of dicarbonyl compounds. Displays reductase activity in vitro with 3,4-hexanedione, 2,3-heptanedione and 1-phenyl-1,2-propanedione as substrates. May function as a dicarbonyl reductase in the enzymatic inactivation of reactive carbonyls involved in covalent modification of cellular components. Also displays a minor hydroxysteroid dehydrogenase activity toward bile acids such as ursodeoxycholic acid (UDCA) and isoursodeoxycholic acid (isoUDCA), which makes it unlikely to control hormone levels. Doesn't show any activity in vitro with retinoids and sugars as substrates. Attenuates MDM2-mediated p53/TP53 degradation, leading to p53/TP53 stabilization and increased transcription activity, resulting in the accumulation of MDM2 and CDKN1A/p21. Reduces proliferation, migration and invasion of cancer cells and well as the production of ROS in cancer. The chain is Dehydrogenase/reductase SDR family member 2, mitochondrial from Homo sapiens (Human).